The chain runs to 88 residues: Protein alpha-1 (88 aa).

A helical membrane pass occupies residues 38–58 (GFWIILIILLGILAIRIAIKV).

The protein localises to the membrane. This chain is Protein alpha-1 (alpha), found in Bos taurus (Bovine).